The chain runs to 502 residues: 1-aminocyclopropane-1-carboxylate synthase-like protein 1 (502 aa).

The segment at 1–24 (MFCLPQQESTAPTTCTGSASTQDM) is disordered. Glu-106 contacts substrate. At Lys-324 the chain carries N6-(pyridoxal phosphate)lysine.

This sequence belongs to the class-I pyridoxal-phosphate-dependent aminotransferase family.

Does not catalyze the synthesis of 1-aminocyclopropane-1-carboxylate but is capable of catalyzing the deamination of L-vinylglycine. This chain is 1-aminocyclopropane-1-carboxylate synthase-like protein 1 (Accs), found in Mus musculus (Mouse).